The primary structure comprises 272 residues: Dihydropteroate synthase (272 aa).

The Pterin-binding domain occupies 1 to 251 (MIKTKIMGIL…GVRVHNVLLN (251 aa)). Asn11 contacts Mg(2+). (7,8-dihydropterin-6-yl)methyl diphosphate contacts are provided by residues Thr51, Asp89, Asn108, Asp172, Lys208, and 244–246 (RVH).

Belongs to the DHPS family. As to quaternary structure, homodimer. Mg(2+) serves as cofactor.

It carries out the reaction (7,8-dihydropterin-6-yl)methyl diphosphate + 4-aminobenzoate = 7,8-dihydropteroate + diphosphate. Its pathway is cofactor biosynthesis; tetrahydrofolate biosynthesis; 7,8-dihydrofolate from 2-amino-4-hydroxy-6-hydroxymethyl-7,8-dihydropteridine diphosphate and 4-aminobenzoate: step 1/2. In terms of biological role, catalyzes the condensation of para-aminobenzoate (pABA) with 6-hydroxymethyl-7,8-dihydropterin diphosphate (DHPt-PP) to form 7,8-dihydropteroate (H2Pte), the immediate precursor of folate derivatives. This is Dihydropteroate synthase (folP) from Staphylococcus epidermidis (strain ATCC 35984 / DSM 28319 / BCRC 17069 / CCUG 31568 / BM 3577 / RP62A).